A 96-amino-acid chain; its full sequence is Ferredoxin-1 (96 aa).

The 95-residue stretch at 1–95 folds into the 2Fe-2S ferredoxin-type domain; the sequence is MKVIINGKEF…DCDEIVIESE (95 aa). [2Fe-2S] cluster-binding residues include Cys-34, Cys-39, Cys-42, and Cys-78. A disulfide bond links Cys-52 and Cys-87.

This sequence belongs to the 2Fe2S plant-type ferredoxin family. Requires [2Fe-2S] cluster as cofactor.

Its function is as follows. Ferredoxins are iron-sulfur proteins that transfer electrons in a wide variety of metabolic reactions. This Aquifex aeolicus (strain VF5) protein is Ferredoxin-1 (fdx1).